The chain runs to 2282 residues: Ectopic P granules protein 5 homolog (2282 aa).

This sequence belongs to the EPG5 family.

Functionally, involved in autophagy. The chain is Ectopic P granules protein 5 homolog from Aedes aegypti (Yellowfever mosquito).